The chain runs to 431 residues: MRYQRPKGTADILPGDSQTWQYVEGQARQIFKTYGYQEIRTPLFESYDIFSRSAGDTSDVVTKEMYDFKDKGDRHIALRPEGTAGVVRAFVENKLYGPEFNKPYKVYYIGPMFRYERPQSGRQREFHQIGVEAFGADNPAVDVEVITMALRFFKKLGLSDLRVAVNSLGDQESRANYRQALIDYLKPHYDELSEDSKERLEKNPLRVLDSKDERDQQFVENAPSILDYLTPAAAERFDQVKEMLDSLGIDYVVDATMVRGLDYYNHTIFEVMVKAKSLGHGYTTICGGGRYSGLVEELGGPDEPGVGFGIGLERLILLLGDEGVELPTEDGLDVYVVGIGEATNLESFRLVTAARDAGLVAERDYLNRKPKAQFKTAAKEGAKVTLTVGQREIEEGTVHFKVMATGKEVSVPLADCLADFGKVYQEHVEEG.

The protein belongs to the class-II aminoacyl-tRNA synthetase family. In terms of assembly, homodimer.

The protein resides in the cytoplasm. The catalysed reaction is tRNA(His) + L-histidine + ATP = L-histidyl-tRNA(His) + AMP + diphosphate + H(+). The polypeptide is Histidine--tRNA ligase (Limosilactobacillus fermentum (strain NBRC 3956 / LMG 18251) (Lactobacillus fermentum)).